Consider the following 175-residue polypeptide: Ribosome maturation factor RimM (175 aa).

A PRC barrel domain is found at 95-175 (EEGDYYWHDL…TITVDWDAGF (81 aa)).

The protein belongs to the RimM family. Binds ribosomal protein uS19.

The protein localises to the cytoplasm. Functionally, an accessory protein needed during the final step in the assembly of 30S ribosomal subunit, possibly for assembly of the head region. Essential for efficient processing of 16S rRNA. May be needed both before and after RbfA during the maturation of 16S rRNA. It has affinity for free ribosomal 30S subunits but not for 70S ribosomes. The polypeptide is Ribosome maturation factor RimM (Glaesserella parasuis serovar 5 (strain SH0165) (Haemophilus parasuis)).